A 95-amino-acid polypeptide reads, in one-letter code: Aspartyl/glutamyl-tRNA(Asn/Gln) amidotransferase subunit C (95 aa).

It belongs to the GatC family. In terms of assembly, heterotrimer of A, B and C subunits.

It catalyses the reaction L-glutamyl-tRNA(Gln) + L-glutamine + ATP + H2O = L-glutaminyl-tRNA(Gln) + L-glutamate + ADP + phosphate + H(+). It carries out the reaction L-aspartyl-tRNA(Asn) + L-glutamine + ATP + H2O = L-asparaginyl-tRNA(Asn) + L-glutamate + ADP + phosphate + 2 H(+). Allows the formation of correctly charged Asn-tRNA(Asn) or Gln-tRNA(Gln) through the transamidation of misacylated Asp-tRNA(Asn) or Glu-tRNA(Gln) in organisms which lack either or both of asparaginyl-tRNA or glutaminyl-tRNA synthetases. The reaction takes place in the presence of glutamine and ATP through an activated phospho-Asp-tRNA(Asn) or phospho-Glu-tRNA(Gln). The chain is Aspartyl/glutamyl-tRNA(Asn/Gln) amidotransferase subunit C from Chloroherpeton thalassium (strain ATCC 35110 / GB-78).